Consider the following 89-residue polypeptide: Protein FAM25A (89 aa).

Belongs to the FAM25 family.

The sequence is that of Protein FAM25A from Mus musculus (Mouse).